Consider the following 335-residue polypeptide: Glycerol-3-phosphate dehydrogenase [NAD(P)+] (335 aa).

NADPH-binding residues include Ser-10, Phe-11, Arg-31, and Lys-105. Sn-glycerol 3-phosphate-binding residues include Lys-105, Gly-136, and Ser-138. Ala-140 is an NADPH binding site. 5 residues coordinate sn-glycerol 3-phosphate: Lys-191, Asp-244, Ser-254, Arg-255, and Asn-256. Lys-191 functions as the Proton acceptor in the catalytic mechanism. NADPH is bound at residue Arg-255. NADPH-binding residues include Val-279 and Glu-281.

This sequence belongs to the NAD-dependent glycerol-3-phosphate dehydrogenase family.

It is found in the cytoplasm. It carries out the reaction sn-glycerol 3-phosphate + NAD(+) = dihydroxyacetone phosphate + NADH + H(+). The catalysed reaction is sn-glycerol 3-phosphate + NADP(+) = dihydroxyacetone phosphate + NADPH + H(+). The protein operates within membrane lipid metabolism; glycerophospholipid metabolism. Functionally, catalyzes the reduction of the glycolytic intermediate dihydroxyacetone phosphate (DHAP) to sn-glycerol 3-phosphate (G3P), the key precursor for phospholipid synthesis. The sequence is that of Glycerol-3-phosphate dehydrogenase [NAD(P)+] from Myxococcus xanthus (strain DK1622).